Reading from the N-terminus, the 358-residue chain is DNA replication and repair protein RecF (358 aa).

Residue 30-37 coordinates ATP; that stretch reads GANGSGKT.

Belongs to the RecF family.

It localises to the cytoplasm. In terms of biological role, the RecF protein is involved in DNA metabolism; it is required for DNA replication and normal SOS inducibility. RecF binds preferentially to single-stranded, linear DNA. It also seems to bind ATP. The chain is DNA replication and repair protein RecF from Edwardsiella ictaluri (strain 93-146).